Reading from the N-terminus, the 283-residue chain is Tetraspanin-33 (283 aa).

Residues 1–24 lie on the Cytoplasmic side of the membrane; it reads MARRPGAPAAYGEDFSFVSPLVKY. The helical transmembrane segment at 25 to 45 threads the bilayer; that stretch reads LLFFFNMLFWVISMVMVAVGV. The Extracellular portion of the chain corresponds to 46-64; that stretch reads YARLMKHEEAALACLAVDP. The chain crosses the membrane as a helical span at residues 65–85; sequence AILLIVVGILMFLLTFCGCIG. Over 86–96 the chain is Cytoplasmic; sequence SLRENICLLQT. A helical membrane pass occupies residues 97-117; sequence FSLCLTVVFLLQLAAGVLGFV. The Extracellular portion of the chain corresponds to 118-235; it reads FSDKVRGKVS…DRLVNWIHSN (118 aa). 4 cysteine pairs are disulfide-bonded: C156-C224, C157-C189, C173-C183, and C190-C203. N172 carries N-linked (GlcNAc...) asparagine glycosylation. A helical membrane pass occupies residues 236–256; the sequence is LFVLGGVALGLAIPQLVGIML. The Cytoplasmic portion of the chain corresponds to 257 to 283; that stretch reads SMILVSQIKDQIKLQLYNQQHRADPWY.

The protein belongs to the tetraspanin (TM4SF) family. Homodimer; disulfide-linked. Interacts (via extracellular domain) with ADAM10 (via extracellular domain). Interacts (via cytoplasmic domain) with PLEKHA7 (via WW domains); the interaction is dependent on PDZD11 being bound to PLEKHA7 and facilitates the docking of ADAM10 to zonula adherens.

The protein localises to the cell membrane. Its subcellular location is the cell junction. It localises to the adherens junction. The protein resides in the cytoplasm. Its function is as follows. Part of TspanC8 subgroup, composed of 6 members that interact with the transmembrane metalloprotease ADAM10. This interaction is required for ADAM10 exit from the endoplasmic reticulum and for enzymatic maturation and trafficking to the cell surface as well as substrate specificity. Different TspanC8/ADAM10 complexes have distinct substrates. Plays an important role in normal erythropoiesis. It has a role in the differentiation of erythroid progenitors. Negatively regulates ligand-induced Notch activity probably by regulating ADAM10 activity. Mediates docking of ADAM10 to zonula adherens by interacting with ADAM10 and, in a PDZD11-dependent manner, with the zonula adherens protein PLEKHA7. The polypeptide is Tetraspanin-33 (TSPAN33) (Bos taurus (Bovine)).